We begin with the raw amino-acid sequence, 621 residues long: 1-deoxy-D-xylulose-5-phosphate synthase (621 aa).

Residues His80 and 121–123 (GHS) each bind thiamine diphosphate. Asp152 is a binding site for Mg(2+). Residues 153–154 (GA), Asn181, Tyr288, and Glu370 contribute to the thiamine diphosphate site. Mg(2+) is bound at residue Asn181.

Belongs to the transketolase family. DXPS subfamily. As to quaternary structure, homodimer. Requires Mg(2+) as cofactor. Thiamine diphosphate serves as cofactor.

It catalyses the reaction D-glyceraldehyde 3-phosphate + pyruvate + H(+) = 1-deoxy-D-xylulose 5-phosphate + CO2. Its pathway is metabolic intermediate biosynthesis; 1-deoxy-D-xylulose 5-phosphate biosynthesis; 1-deoxy-D-xylulose 5-phosphate from D-glyceraldehyde 3-phosphate and pyruvate: step 1/1. Functionally, catalyzes the acyloin condensation reaction between C atoms 2 and 3 of pyruvate and glyceraldehyde 3-phosphate to yield 1-deoxy-D-xylulose-5-phosphate (DXP). This chain is 1-deoxy-D-xylulose-5-phosphate synthase, found in Shewanella sediminis (strain HAW-EB3).